A 208-amino-acid polypeptide reads, in one-letter code: Large ribosomal subunit protein uL4 (208 aa).

The tract at residues 45–85 (RQGTHKAKTRAQVRGGGRKPYRQKGTGNARQGSTRSPLMIG) is disordered. Positions 46 to 66 (QGTHKAKTRAQVRGGGRKPYR) are enriched in basic residues. Polar residues predominate over residues 69–80 (GTGNARQGSTRS).

It belongs to the universal ribosomal protein uL4 family. Part of the 50S ribosomal subunit.

Its function is as follows. One of the primary rRNA binding proteins, this protein initially binds near the 5'-end of the 23S rRNA. It is important during the early stages of 50S assembly. It makes multiple contacts with different domains of the 23S rRNA in the assembled 50S subunit and ribosome. Forms part of the polypeptide exit tunnel. This Chlorobium phaeobacteroides (strain DSM 266 / SMG 266 / 2430) protein is Large ribosomal subunit protein uL4.